The sequence spans 101 residues: Cysteine-rich and transmembrane domain-containing protein B (101 aa).

The interval 1 to 80 (MSQQPPAVGV…PQQQQQQKHS (80 aa)) is disordered. The span at 24-43 (DAYPPPGQPYPQQGYPPPQG) shows a compositional bias: pro residues. The span at 59–77 (YPEQGYPQQGYPPQQQQQQ) shows a compositional bias: low complexity. The helical transmembrane segment at 78 to 95 (KHSPGMLEGCIAALCCYC) threads the bilayer.

The protein belongs to the CYSTM1 family.

The protein resides in the membrane. The chain is Cysteine-rich and transmembrane domain-containing protein B from Arabidopsis thaliana (Mouse-ear cress).